The sequence spans 450 residues: Interferon-related developmental regulator 1 (450 aa).

Residues 1 to 10 (MPKNKKRNTP) are compositionally biased toward basic residues. Positions 1-46 (MPKNKKRNTPHRGGSGGGGSGAAATTAATAGGQHRNVQPFSDEDAS) are disordered. The span at 22–32 (AAATTAATAGG) shows a compositional bias: low complexity.

The protein belongs to the IFRD family. As to quaternary structure, interacts with PSIP1/LEDGF.

Its function is as follows. Could play a role in regulating gene activity in the proliferative and/or differentiative pathways induced by NGF. May be an autocrine factor that attenuates or amplifies the initial ligand-induced signal. This is Interferon-related developmental regulator 1 (IFRD1) from Sus scrofa (Pig).